A 113-amino-acid polypeptide reads, in one-letter code: Hydrogenase maturation factor HybF (113 aa).

Ni(2+) contacts are provided by His2 and Glu3. Residues Cys73, Cys76, Cys89, and Cys92 each contribute to the Zn(2+) site.

Belongs to the HypA/HybF family. HybF subfamily.

In terms of biological role, involved in the maturation of [NiFe] hydrogenases. Required for nickel insertion into the metal center of the hydrogenase. The protein is Hydrogenase maturation factor HybF of Escherichia coli O157:H7.